We begin with the raw amino-acid sequence, 353 residues long: UPF0283 membrane protein KPN78578_12740 (353 aa).

3 helical membrane passes run 70–90, 99–119, and 213–233; these read MVSA…VQWT, WIAL…VGSL, and ESTL…FIAW.

This sequence belongs to the UPF0283 family.

The protein localises to the cell inner membrane. The protein is UPF0283 membrane protein KPN78578_12740 of Klebsiella pneumoniae subsp. pneumoniae (strain ATCC 700721 / MGH 78578).